A 324-amino-acid chain; its full sequence is Annexin A10 (324 aa).

Annexin repeat units lie at residues 17 to 88, 89 to 160, 171 to 243, and 247 to 318; these read FNPI…GLMY, PPPL…NLVQ, AMAA…AIVL, and DKPA…AICA.

It belongs to the annexin family.

This Homo sapiens (Human) protein is Annexin A10 (ANXA10).